Here is a 304-residue protein sequence, read N- to C-terminus: Taste receptor type 2 member 4 (304 aa).

Residues 1–10 (MLWELYAFVF) are Extracellular-facing. Residues 11 to 31 (AASVVFNFVGIVANLFIIVII) traverse the membrane as a helical segment. The Cytoplasmic segment spans residues 32 to 46 (SKTWVKSHKISSSDK). A helical transmembrane segment spans residues 47–67 (ILFSLAITRFLTLGLFLLNTV). The Extracellular segment spans residues 68–80 (YIATNTGRSVYFS). Residues 81–101 (TFFLLCWKFLDSNSLWLVTFL) traverse the membrane as a helical segment. Over 102 to 128 (NCLYCVKITHFQHPVFLLLKRTVSMKT) the chain is Cytoplasmic. A helical membrane pass occupies residues 129–149 (TSLLLACLLISAFTTLLYFVL). At 150–171 (TQISRFPEHIIGRNDTLFDVSD) the chain is on the extracellular side. Asn163 is a glycosylation site (N-linked (GlcNAc...) asparagine). Residues 172 to 192 (GILTLAASLILSSLLQFLLNV) form a helical membrane-spanning segment. Residues 193–229 (TFASLLIHSLRRHVQKMQRNRSSFWNPQTEAHVGAMR) are Cytoplasmic-facing. The helical transmembrane segment at 230–250 (LMICFLVLYIPYSIAALLYFP) threads the bilayer. Over 251–260 (SYMRKNLRAQ) the chain is Extracellular. A helical membrane pass occupies residues 261 to 281 (AACMIITAAYPPGHSILLIIT). Topologically, residues 282–304 (HHKLKAKAKKICCFYKLRDFVSN) are cytoplasmic.

The protein belongs to the G-protein coupled receptor T2R family. Expressed in tongue, stomach and duodenum.

Its subcellular location is the membrane. It is found in the cell projection. It localises to the cilium membrane. In terms of biological role, gustducin-coupled receptor implicated in the perception of bitter compounds in the oral cavity and the gastrointestinal tract. Signals through PLCB2 and the calcium-regulated cation channel TRPM5. In airway epithelial cells, binding of denatonium increases the intracellular calcium ion concentration and stimulates ciliary beat frequency. This is Taste receptor type 2 member 4 from Rattus norvegicus (Rat).